Reading from the N-terminus, the 370-residue chain is Holliday junction branch migration complex subunit RuvB (370 aa).

The segment at 1–182 (MDERMMTSAK…FGVIHRLEYY (182 aa)) is large ATPase domain (RuvB-L). ATP is bound by residues L21, R22, G63, K66, T67, T68, 129-131 (EDF), R172, Y182, and R219. T67 serves as a coordination point for Mg(2+). The small ATPAse domain (RuvB-S) stretch occupies residues 183–253 (RPDELEFIIL…VAREALRRLE (71 aa)). Residues 256–370 (PRGLDTTDQR…AEQAALSFDE (115 aa)) form a head domain (RuvB-H) region. Residues R311 and R316 each coordinate DNA.

Belongs to the RuvB family. In terms of assembly, homohexamer. Forms an RuvA(8)-RuvB(12)-Holliday junction (HJ) complex. HJ DNA is sandwiched between 2 RuvA tetramers; dsDNA enters through RuvA and exits via RuvB. An RuvB hexamer assembles on each DNA strand where it exits the tetramer. Each RuvB hexamer is contacted by two RuvA subunits (via domain III) on 2 adjacent RuvB subunits; this complex drives branch migration. In the full resolvosome a probable DNA-RuvA(4)-RuvB(12)-RuvC(2) complex forms which resolves the HJ.

It localises to the cytoplasm. It catalyses the reaction ATP + H2O = ADP + phosphate + H(+). The RuvA-RuvB-RuvC complex processes Holliday junction (HJ) DNA during genetic recombination and DNA repair, while the RuvA-RuvB complex plays an important role in the rescue of blocked DNA replication forks via replication fork reversal (RFR). RuvA specifically binds to HJ cruciform DNA, conferring on it an open structure. The RuvB hexamer acts as an ATP-dependent pump, pulling dsDNA into and through the RuvAB complex. RuvB forms 2 homohexamers on either side of HJ DNA bound by 1 or 2 RuvA tetramers; 4 subunits per hexamer contact DNA at a time. Coordinated motions by a converter formed by DNA-disengaged RuvB subunits stimulates ATP hydrolysis and nucleotide exchange. Immobilization of the converter enables RuvB to convert the ATP-contained energy into a lever motion, pulling 2 nucleotides of DNA out of the RuvA tetramer per ATP hydrolyzed, thus driving DNA branch migration. The RuvB motors rotate together with the DNA substrate, which together with the progressing nucleotide cycle form the mechanistic basis for DNA recombination by continuous HJ branch migration. Branch migration allows RuvC to scan DNA until it finds its consensus sequence, where it cleaves and resolves cruciform DNA. The protein is Holliday junction branch migration complex subunit RuvB of Heliobacterium modesticaldum (strain ATCC 51547 / Ice1).